A 365-amino-acid chain; its full sequence is Probable tRNA pseudouridine synthase B (365 aa).

The active-site Nucleophile is the D43. The PUA domain occupies 209 to 285 (YPKIVVKRSA…DHIFLEADDG (77 aa)). Residues 300–365 (SGSGLHKDIQ…GKERHGRDHQ (66 aa)) form a disordered region. 3 stretches are compositionally biased toward basic and acidic residues: residues 304-318 (LHKD…KDTR), 326-336 (TGPEKTADRVW), and 354-365 (GGGKERHGRDHQ).

Belongs to the pseudouridine synthase TruB family. Type 2 subfamily.

It catalyses the reaction uridine(55) in tRNA = pseudouridine(55) in tRNA. Its function is as follows. Could be responsible for synthesis of pseudouridine from uracil-55 in the psi GC loop of transfer RNAs. This is Probable tRNA pseudouridine synthase B from Thermoplasma acidophilum (strain ATCC 25905 / DSM 1728 / JCM 9062 / NBRC 15155 / AMRC-C165).